A 461-amino-acid polypeptide reads, in one-letter code: Growth/differentiation factor 7 (461 aa).

The signal sequence occupies residues M1–P19. Residues R20–R315 constitute a propeptide that is removed on maturation. N-linked (GlcNAc...) asparagine glycosylation is present at N79. The tract at residues L287–C360 is disordered. Over residues G323–R350 the composition is skewed to gly residues. The segment covering G351–C360 has biased composition (basic residues). Cystine bridges form between C360/C426, C389/C458, and C393/C460.

The protein belongs to the TGF-beta family. Homodimer; disulfide-linked.

The protein resides in the secreted. The polypeptide is Growth/differentiation factor 7 (Gdf7) (Mus musculus (Mouse)).